The chain runs to 1231 residues: S-layer protein A (1231 aa).

Residues 1 to 35 (MNKTLGLILTSVFLLSTLGIITGFVIPTQAANSND) form the signal peptide.

It belongs to the Sulfolobales SlaA family. In terms of assembly, the mushroom-shaped unit cells of the Sulfolobales' S-layers may consist of three SlaB subunits and six SlaA subunits.

The protein localises to the secreted. Its subcellular location is the cell wall. It localises to the S-layer. S-layer large protein. May form the highly ordered outer sheath. In Saccharolobus solfataricus (strain ATCC 35092 / DSM 1617 / JCM 11322 / P2) (Sulfolobus solfataricus), this protein is S-layer protein A.